The primary structure comprises 124 residues: S-adenosylmethionine decarboxylase proenzyme (124 aa).

Ser63 serves as the catalytic Schiff-base intermediate with substrate; via pyruvic acid. Ser63 carries the post-translational modification Pyruvic acid (Ser); by autocatalysis. The active-site Proton acceptor; for processing activity is His68. The active-site Proton donor; for catalytic activity is Cys83.

Belongs to the prokaryotic AdoMetDC family. Type 1 subfamily. As to quaternary structure, heterotetramer of two alpha and two beta chains arranged as a dimer of alpha/beta heterodimers. Pyruvate is required as a cofactor. Is synthesized initially as an inactive proenzyme. Formation of the active enzyme involves a self-maturation process in which the active site pyruvoyl group is generated from an internal serine residue via an autocatalytic post-translational modification. Two non-identical subunits are generated from the proenzyme in this reaction, and the pyruvate is formed at the N-terminus of the alpha chain, which is derived from the carboxyl end of the proenzyme. The post-translation cleavage follows an unusual pathway, termed non-hydrolytic serinolysis, in which the side chain hydroxyl group of the serine supplies its oxygen atom to form the C-terminus of the beta chain, while the remainder of the serine residue undergoes an oxidative deamination to produce ammonia and the pyruvoyl group blocking the N-terminus of the alpha chain.

It catalyses the reaction S-adenosyl-L-methionine + H(+) = S-adenosyl 3-(methylsulfanyl)propylamine + CO2. The protein operates within amine and polyamine biosynthesis; S-adenosylmethioninamine biosynthesis; S-adenosylmethioninamine from S-adenosyl-L-methionine: step 1/1. In terms of biological role, catalyzes the decarboxylation of S-adenosylmethionine to S-adenosylmethioninamine (dcAdoMet), the propylamine donor required for the synthesis of the polyamines spermine and spermidine from the diamine putrescine. In Acetivibrio thermocellus (strain ATCC 27405 / DSM 1237 / JCM 9322 / NBRC 103400 / NCIMB 10682 / NRRL B-4536 / VPI 7372) (Clostridium thermocellum), this protein is S-adenosylmethionine decarboxylase proenzyme.